Reading from the N-terminus, the 312-residue chain is MVLTIRAILWVTLITIISLEFIIGILGNVFIALVNIIDWVKRGKISAVDKTYMALAISRTAFLLSLITGFLVSLLDPALLGMRTMVRLLTISWMVTNHFSVWFATCLSIFYFLKIANFSNSIFLVLKWEAKKVVSVTLVVSVIILIMNIIVINKFTDRLQVNTLQNCSTSNTLKDYGLFLFISTGFTLTPFAVSLTMFLLLIFSLWRHLKNMCHSATGSRDVSTVAHIKGLQTVVTFLLLYTAFVMSLLSESLNINIQHTNLLSHFLRSIGVAFPTGHSCVLILGNSKLRQASLSVILWLRYKYKHIENWGP.

Residues 1–6 (MVLTIR) are Extracellular-facing. A helical transmembrane segment spans residues 7–27 (AILWVTLITIISLEFIIGILG). At 28–61 (NVFIALVNIIDWVKRGKISAVDKTYMALAISRTA) the chain is on the cytoplasmic side. A helical membrane pass occupies residues 62 to 82 (FLLSLITGFLVSLLDPALLGM). Topologically, residues 83 to 92 (RTMVRLLTIS) are extracellular. A helical transmembrane segment spans residues 93–113 (WMVTNHFSVWFATCLSIFYFL). Over 114–132 (KIANFSNSIFLVLKWEAKK) the chain is Cytoplasmic. Residues 133–153 (VVSVTLVVSVIILIMNIIVIN) form a helical membrane-spanning segment. Residues 154–185 (KFTDRLQVNTLQNCSTSNTLKDYGLFLFISTG) are Extracellular-facing. N-linked (GlcNAc...) asparagine glycosylation occurs at Asn166. A helical membrane pass occupies residues 186–206 (FTLTPFAVSLTMFLLLIFSLW). Residues 207–229 (RHLKNMCHSATGSRDVSTVAHIK) are Cytoplasmic-facing. The chain crosses the membrane as a helical span at residues 230–250 (GLQTVVTFLLLYTAFVMSLLS). The Extracellular portion of the chain corresponds to 251 to 264 (ESLNINIQHTNLLS). The helical transmembrane segment at 265–285 (HFLRSIGVAFPTGHSCVLILG) threads the bilayer. At 286–312 (NSKLRQASLSVILWLRYKYKHIENWGP) the chain is on the cytoplasmic side.

The protein belongs to the G-protein coupled receptor T2R family. In terms of tissue distribution, expressed in subsets of taste receptor cells of the tongue and palate epithelium and exclusively in gustducin-positive cells. Expressed in 15% taste bud cells in circumvallate and foliate papillae but only in 2% in fungiform papillae.

The protein localises to the membrane. Its function is as follows. Gustducin-coupled receptor implicated in the perception of bitter compounds in the oral cavity and the gastrointestinal tract. Signals through PLCB2 and the calcium-regulated cation channel TRPM5. The chain is Taste receptor type 2 member 103 (Tas2r103) from Mus musculus (Mouse).